Here is a 125-residue protein sequence, read N- to C-terminus: Small ribosomal subunit protein eS8 (125 aa).

A compositionally biased stretch (basic residues) spans 1–23 (MQFQGRSRRKYTGAKLKSARGKR). Residues 1–34 (MQFQGRSRRKYTGAKLKSARGKRKFELGREPAAT) form a disordered region.

Belongs to the eukaryotic ribosomal protein eS8 family. As to quaternary structure, part of the 30S ribosomal subunit.

The polypeptide is Small ribosomal subunit protein eS8 (Methanococcoides burtonii (strain DSM 6242 / NBRC 107633 / OCM 468 / ACE-M)).